The following is a 271-amino-acid chain: Formamidopyrimidine-DNA glycosylase (271 aa).

The active-site Schiff-base intermediate with DNA is Pro2. The active-site Proton donor is the Glu3. The Proton donor; for beta-elimination activity role is filled by Lys58. His91, Arg110, and Arg152 together coordinate DNA. The segment at 237–271 (RVYDRAGQPCRVCGEPIRCVRLGQRATYYCPRCQR) adopts an FPG-type zinc-finger fold. The active-site Proton donor; for delta-elimination activity is the Arg261.

It belongs to the FPG family. In terms of assembly, monomer. Requires Zn(2+) as cofactor.

The enzyme catalyses Hydrolysis of DNA containing ring-opened 7-methylguanine residues, releasing 2,6-diamino-4-hydroxy-5-(N-methyl)formamidopyrimidine.. It catalyses the reaction 2'-deoxyribonucleotide-(2'-deoxyribose 5'-phosphate)-2'-deoxyribonucleotide-DNA = a 3'-end 2'-deoxyribonucleotide-(2,3-dehydro-2,3-deoxyribose 5'-phosphate)-DNA + a 5'-end 5'-phospho-2'-deoxyribonucleoside-DNA + H(+). Functionally, involved in base excision repair of DNA damaged by oxidation or by mutagenic agents. Acts as a DNA glycosylase that recognizes and removes damaged bases. Has a preference for oxidized purines, such as 7,8-dihydro-8-oxoguanine (8-oxoG). Has AP (apurinic/apyrimidinic) lyase activity and introduces nicks in the DNA strand. Cleaves the DNA backbone by beta-delta elimination to generate a single-strand break at the site of the removed base with both 3'- and 5'-phosphates. The polypeptide is Formamidopyrimidine-DNA glycosylase (Methylococcus capsulatus (strain ATCC 33009 / NCIMB 11132 / Bath)).